The following is a 717-amino-acid chain: UV-stimulated scaffold protein A (717 aa).

The VHS-like stretch occupies residues 2 to 145; it reads DQKLSQLIEE…HFLKHTKKVD (144 aa). A coiled-coil region spans residues 169–199; it reads KIHRESADRAKREMEEMYDEIECCLTEVENC. Disordered regions lie at residues 231 to 253, 277 to 301, 389 to 418, and 479 to 503; these read PLSP…EEQP, QTAM…RSHG, PGRG…EKEG, and CLSS…QAER. 3 positions are modified to phosphoserine: S284, S291, and S403. 2 stretches are compositionally biased toward acidic residues: residues 285-294 and 400-412; these read RDEDEPSDPD and LEDS…DFVE. A Glycyl lysine isopeptide (Lys-Gly) (interchain with G-Cter in ubiquitin) cross-link involves residue K416. Over residues 479-489 the composition is skewed to polar residues; sequence CLSSPSPSSTR. The UVSSA-type zinc-finger motif lies at 571-598; that stretch reads QHKCRALRPNGRLCERQDRLKCPFHGKI. C574, C584, C592, and H595 together coordinate Zn(2+). A disordered region spans residues 595–672; it reads HGKIIPRDDK…HPNLTDLRER (78 aa). Basic and acidic residues predominate over residues 599 to 618; sequence IPRDDKGQPLNPEDRAREQR. Positions 652-664 are enriched in basic residues; it reads SSKKGKGKKKKHP.

Belongs to the UVSSA family. As to quaternary structure, interacts with the elongating form of RNA polymerase II (RNA pol IIo) during transcription stress. Interacts with the TFIIH complex during transcription stress. Interacts with ERCC6. Interacts with ERCC8. Interacts with USP7. Monoubiquitinated at Lys-416 in response to transcription stress; this promotes efficient transfer of TFIIH to stalled RNA polymerase II.

The protein resides in the chromosome. In terms of biological role, factor involved in transcription-coupled nucleotide excision repair (TC-NER), a mechanism that rapidly removes RNA polymerase II-blocking lesions from the transcribed strand of active genes. Acts as a key adapter that promotes recruitment of factors involved in TC-NER. Facilitates the ubiquitination of the elongating form of RNA polymerase II (RNA pol IIo) at DNA damage sites, thereby promoting RNA pol IIo backtracking and access by the TC-NER machinery to lesion sites. Also promotes stabilization of ERCC6/CSB by recruiting deubiquitinating enzyme USP7 to TC-NER complexes, preventing UV-induced degradation of ERCC6 by the proteasome. Mediates the recruitment of the TFIIH complex and other factors that are required for nucleotide excision repair to RNA polymerase II. Also required to inactivate stalled RNA polymerase II by blocking the access of TCEA1/TFIIS, thereby preventing reactivation of RNA polymerase II. Not involved in processing oxidative damage. This Mus musculus (Mouse) protein is UV-stimulated scaffold protein A (Uvssa).